Here is a 275-residue protein sequence, read N- to C-terminus: Phosphate import ATP-binding protein PstB (275 aa).

The region spanning 28–270 (MSAKNVSVFY…PREERTKDYI (243 aa)) is the ABC transporter domain. 60 to 67 (GPSGCGKS) provides a ligand contact to ATP.

It belongs to the ABC transporter superfamily. Phosphate importer (TC 3.A.1.7) family. In terms of assembly, the complex is composed of two ATP-binding proteins (PstB), two transmembrane proteins (PstC and PstA) and a solute-binding protein (PstS).

Its subcellular location is the cell inner membrane. It carries out the reaction phosphate(out) + ATP + H2O = ADP + 2 phosphate(in) + H(+). Part of the ABC transporter complex PstSACB involved in phosphate import. Responsible for energy coupling to the transport system. In Novosphingobium aromaticivorans (strain ATCC 700278 / DSM 12444 / CCUG 56034 / CIP 105152 / NBRC 16084 / F199), this protein is Phosphate import ATP-binding protein PstB.